Reading from the N-terminus, the 332-residue chain is Glyceraldehyde-3-phosphate dehydrogenase (332 aa).

Residues 11–12 (RI), aspartate 34, arginine 78, and serine 120 each bind NAD(+). Residues 151 to 153 (SCT), threonine 182, arginine 197, 210 to 211 (TG), and arginine 233 each bind D-glyceraldehyde 3-phosphate. The active-site Nucleophile is the cysteine 152. Asparagine 314 is a binding site for NAD(+).

It belongs to the glyceraldehyde-3-phosphate dehydrogenase family. In terms of assembly, homotetramer.

It is found in the cytoplasm. The catalysed reaction is D-glyceraldehyde 3-phosphate + phosphate + NAD(+) = (2R)-3-phospho-glyceroyl phosphate + NADH + H(+). It functions in the pathway carbohydrate degradation; glycolysis; pyruvate from D-glyceraldehyde 3-phosphate: step 1/5. Functionally, catalyzes the oxidative phosphorylation of glyceraldehyde 3-phosphate (G3P) to 1,3-bisphosphoglycerate (BPG) using the cofactor NAD. The first reaction step involves the formation of a hemiacetal intermediate between G3P and a cysteine residue, and this hemiacetal intermediate is then oxidized to a thioester, with concomitant reduction of NAD to NADH. The reduced NADH is then exchanged with the second NAD, and the thioester is attacked by a nucleophilic inorganic phosphate to produce BPG. The chain is Glyceraldehyde-3-phosphate dehydrogenase (gap) from Kitasatospora aureofaciens (Streptomyces aureofaciens).